A 145-amino-acid polypeptide reads, in one-letter code: Secreted RxLR effector protein PSE1 (145 aa).

The first 21 residues, 1-21, serve as a signal peptide directing secretion; it reads MRLSSFIVVGAAVVNLLTSGS. The short motif at 53-73 is the RxLR-dEER element; it reads RLLRYHSNNNRGGDEDIAEER.

Belongs to the RxLR effector family.

Its subcellular location is the secreted. The protein resides in the host cell. Secreted effector that impairs both plant effector-triggered immunity and pathogen-associated molecular patterns (PAMP)-triggered immunity (PTI). Suppresses plant cell death as a part of the plant defense responses. Facilitates plant infection by altering the auxin content at the roots penetration points of the of the pathogen. This chain is Secreted RxLR effector protein PSE1, found in Phytophthora nicotianae (Potato buckeye rot agent).